Reading from the N-terminus, the 342-residue chain is Galactose mutarotase (342 aa).

A2 carries the post-translational modification N-acetylalanine. S14 carries the post-translational modification Phosphoserine. Beta-D-galactose is bound by residues 81-82 (NR) and H107. The residue at position 124 (S124) is a Phosphoserine. H176 (proton donor) is an active-site residue. Beta-D-galactose is bound by residues 176–178 (HSY), D243, Q279, and E307. E307 serves as the catalytic Proton acceptor.

This sequence belongs to the aldose epimerase family. In terms of assembly, monomer.

The protein resides in the cytoplasm. It carries out the reaction alpha-D-galactose = beta-D-galactose. It catalyses the reaction alpha-D-glucose = beta-D-glucose. Its pathway is carbohydrate metabolism; hexose metabolism. The protein operates within carbohydrate metabolism; galactose metabolism. Functionally, mutarotase that catalyzes the interconversion of beta-D-galactose and alpha-D-galactose during galactose metabolism. Beta-D-galactose is metabolized in the liver into glucose 1-phosphate, the primary metabolic fuel, by the action of four enzymes that constitute the Leloir pathway: GALM, GALK1 (galactokinase), GALT (galactose-1-phosphate uridylyltransferase) and GALE (UDP-galactose-4'-epimerase). Involved in the maintenance of the equilibrium between the beta- and alpha-anomers of galactose, therefore ensuring a sufficient supply of the alpha-anomer for GALK1. Also active on D-glucose although shows a preference for galactose over glucose. In Homo sapiens (Human), this protein is Galactose mutarotase.